A 494-amino-acid polypeptide reads, in one-letter code: O-acetyltransferase ptmV (494 aa).

The interval 181-203 (ESQQDSREKLRHSGGPPDPRFDH) is disordered.

This sequence belongs to the fumigaclavine B O-acetyltransferase family. In terms of assembly, monomer.

It participates in secondary metabolite biosynthesis. In terms of biological role, O-acetyltransferase; part of the gene cluster that mediates the biosynthesis of the indole diterpenes penitrems. The geranylgeranyl diphosphate (GGPP) synthase ptmG catalyzes the first step in penitrem biosynthesis via conversion of farnesyl pyrophosphate and isopentyl pyrophosphate into geranylgeranyl pyrophosphate (GGPP). Condensation of indole-3-glycerol phosphate with GGPP by the prenyl transferase ptmC then forms 3-geranylgeranylindole (3-GGI). Epoxidation by the FAD-dependent monooxygenase ptmM leads to a epoxidized-GGI that is substrate of the terpene cyclase ptmB for cyclization to yield paspaline. Paspaline is subsequently converted to 13-desoxypaxilline by the cytochrome P450 monooxygenase ptmP, the latter being then converted to paxilline by the cytochrome P450 monooxygenase ptmQ. Paxilline is converted to beta-paxitriol via C-10 ketoreduction by the short-chain dehydrogenase ptmH which can be monoprenylated at the C-20 by the indole diterpene prenyltransferase ptmD. A two-step elimination (acetylation and elimination) process performed by the O-acetyltransferase ptmV and ptmI leads to the production of the prenylated form of penijanthine. The FAD-linked oxidoreductase ptmO then converts the prenylated form of penijanthine into PC-M5 which is in turn transformed into PC-M4 by the aromatic dimethylallyltransferase ptmE. Five sequential oxidative transformations performed by the cytochrome P450 monooxygenases ptmK, ptmU, ptmL, ptmN and ptmJ yield the various penitrem compounds. PtmK, ptmU and ptmM are involved in the formation of the key bicyclic ring of penitrem C via the formation of the intermediates secopenitrem D and penitrem D. PtmL catalyzes the epoxidation of penitrem D and C to yield penitrem B and F, respectively. PtmJ catalyzes the last benzylic hydroxylation to convert penitrem B to prenitrem E and penitrem F to penitrem A. The chain is O-acetyltransferase ptmV from Penicillium ochrochloron.